The following is a 354-amino-acid chain: Uroporphyrinogen decarboxylase (354 aa).

Residues R27–R31, D77, Y154, S209, and H327 each bind substrate.

The protein belongs to the uroporphyrinogen decarboxylase family. As to quaternary structure, homodimer.

It is found in the cytoplasm. It carries out the reaction uroporphyrinogen III + 4 H(+) = coproporphyrinogen III + 4 CO2. It participates in porphyrin-containing compound metabolism; protoporphyrin-IX biosynthesis; coproporphyrinogen-III from 5-aminolevulinate: step 4/4. Functionally, catalyzes the decarboxylation of four acetate groups of uroporphyrinogen-III to yield coproporphyrinogen-III. The polypeptide is Uroporphyrinogen decarboxylase (Shewanella loihica (strain ATCC BAA-1088 / PV-4)).